Here is a 244-residue protein sequence, read N- to C-terminus: ATP synthase subunit 4, mitochondrial (244 aa).

Residues 1-35 (MSMSMGVRGLALRSVSKTLFSQGVRCPSMVIGARY) constitute a mitochondrion transit peptide. The residue at position 144 (S144) is a Phosphoserine.

The protein belongs to the eukaryotic ATPase B chain family. In terms of assembly, F-type ATPases have 2 components, CF(1) - the catalytic core - and CF(0) - the membrane proton channel. In yeast, the dimeric form of ATP synthase consists of 17 polypeptides: alpha, beta, gamma, delta, epsilon, 4 (B), 5 (OSCP), 6 (A), 8, 9 (C), d, E (Tim11), f, g, h, i/j and k.

The protein resides in the mitochondrion. It localises to the mitochondrion inner membrane. Mitochondrial membrane ATP synthase (F(1)F(0) ATP synthase or Complex V) produces ATP from ADP in the presence of a proton gradient across the membrane which is generated by electron transport complexes of the respiratory chain. F-type ATPases consist of two structural domains, F(1) - containing the extramembraneous catalytic core, and F(0) - containing the membrane proton channel, linked together by a central stalk and a peripheral stalk. During catalysis, ATP synthesis in the catalytic domain of F(1) is coupled via a rotary mechanism of the central stalk subunits to proton translocation. Part of the complex F(0) domain and the peripheric stalk, which acts as a stator to hold the catalytic alpha(3)beta(3) subcomplex and subunit a/ATP6 static relative to the rotary elements. The polypeptide is ATP synthase subunit 4, mitochondrial (ATP4) (Saccharomyces cerevisiae (strain ATCC 204508 / S288c) (Baker's yeast)).